Here is a 326-residue protein sequence, read N- to C-terminus: ELMO domain-containing protein 1 (326 aa).

The region spanning 133 to 306 (QHEEMLLKLW…KFRKRIIKQL (174 aa)) is the ELMO domain.

In terms of biological role, acts as a GTPase-activating protein (GAP) toward guanine nucleotide exchange factors like ARL2, ARL3, ARF1 and ARF6, but not for GTPases outside the Arf family. This is ELMO domain-containing protein 1 (Elmod1) from Mus musculus (Mouse).